A 1016-amino-acid chain; its full sequence is Rho family-interacting cell polarization regulator 2 (1016 aa).

Serine 21 and serine 37 each carry phosphoserine. Positions 44–73 (AVKKPQAKLKKMHNLGHKNSSPPKEPQPKR) are disordered. Residues 48–59 (PQAKLKKMHNLG) are compositionally biased toward basic residues. The interval 55–113 (MHNLGHKNSSPPKEPQPKRVEEVYRALKNGLDEYLEVHQTELDKLTTQLKDMRRNSRLG) is involved in cell filopodia formation. Residues 85-112 (LDEYLEVHQTELDKLTTQLKDMRRNSRL) adopt a coiled-coil conformation. Phosphoserine is present on serine 341. Residues 414 to 428 (TSTELPPGSQSSQNE) are compositionally biased toward polar residues. Residues 414–469 (TSTELPPGSQSSQNEGLKDSSSASCSSSSREGSEPRPHPEGETQGLGKPEGCPVAT) form a disordered region. Positions 433–442 (SSSASCSSSS) are enriched in low complexity. A compositionally biased stretch (basic and acidic residues) spans 444–454 (EGSEPRPHPEG). Serine 520 and serine 532 each carry phosphoserine. Residues 636–656 (DSVFSDTETEKNSYRSVHPEA) form a disordered region. The segment covering 643 to 656 (ETEKNSYRSVHPEA) has biased composition (basic and acidic residues).

The protein belongs to the RIPOR family. As to quaternary structure, homooligomer; homooligomerization is regulated by RHOC and leads to the formation of concatemers through the association of N- and C-termini. Interacts (phosphorylated form) with 14-3-3 proteins; these interactions occur during myogenic cell differentiation and also induces T cell proliferation arrest. Interacts (phosphorylated form) with HDAC6; this interaction occurs during early myogenic differentiation, prevents HDAC6 to deacetylate tubulin and also induces T cell proliferation arrest. Interacts with DYSF; this interaction occurs during early myogenic differentiation. Interacts with MYOF. Interacts (via active GTP- or inactive GDP-bound forms) with RHOA; this interaction is direct, blocks the loading of GTP to RHOA and decreases upon chemokine CCL19 stimulation in primary T lymphocytes. Interacts with RHOC. Interacts (via phosphorylated form) with YWHAB; this interaction occurs in a chemokine-dependent manner and does not compete for binding of RIPOR2 with RHOA nor blocks inhibition of RIPOR2-mediated RHOA activity. Interacts with YWHAE. Interacts with YWHAQ. Phosphorylated. Chemokine-induced phosphorylation in neutrophils occurs in a PKC- and AKT-dependent manner, resulting in RIPOR2 interaction with YWHAB and stabilization. Phosphorylated by PKCA, AKT1 and MAPKAPK1A; in vitro.

Its subcellular location is the cytoplasm. It is found in the cytoskeleton. The protein resides in the cell projection. The protein localises to the filopodium. It localises to the apical cell membrane. Its subcellular location is the stereocilium. It is found in the stereocilium membrane. Its function is as follows. Acts as an inhibitor of the small GTPase RHOA and plays several roles in the regulation of myoblast and hair cell differentiation, lymphocyte T proliferation and neutrophil polarization. Plays a role in fetal mononuclear myoblast differentiation by promoting filopodia and myotube formation. Maintains naive T lymphocytes in a quiescent state and prevents chemokine-induced T lymphocyte responses, such as cell adhesion, polarization and migration. Involved also in the regulation of neutrophil polarization, chemotaxis and adhesion. Required for normal development of inner and outer hair cell stereocilia within the cochlea of the inner ear. Plays a role for maintaining the structural organization of the basal domain of stereocilia. Involved in mechanosensory hair cell function. Required for normal hearing. The protein is Rho family-interacting cell polarization regulator 2 of Bos taurus (Bovine).